The following is a 317-amino-acid chain: UAP56-interacting factor (317 aa).

N-acetylmethionine is present on M1. The disordered stretch occupies residues 1–26 (MNRFGTRLVGATATPPPPPKARSNEN). A Phosphothreonine modification is found at T14. S23 carries the post-translational modification Phosphoserine. Residues 26-44 (NLDKIDMSLDDIIKLNRKE) carry the UAP56-binding motif motif. Phosphoserine is present on residues S60 and S117. K139 participates in a covalent cross-link: Glycyl lysine isopeptide (Lys-Gly) (interchain with G-Cter in SUMO1). Residue K260 forms a Glycyl lysine isopeptide (Lys-Gly) (interchain with G-Cter in SUMO2) linkage.

Belongs to the UIF family. As to quaternary structure, interacts with DDX39B/UAP56 and NXF1; interaction with DDX39B/UAP56 and NXF1 are mutually exclusive. Interacts with SSRP1; required for its recruitment to mRNAs. Interacts with CHTOP.

The protein resides in the nucleus. Its subcellular location is the nucleoplasm. It is found in the nucleus speckle. Its function is as follows. Required for mRNA export from the nucleus to the cytoplasm. Acts as an adapter that uses the DDX39B/UAP56-NFX1 pathway to ensure efficient mRNA export and delivering to the nuclear pore. Associates with spliced and unspliced mRNAs simultaneously with ALYREF/THOC4. In Mus musculus (Mouse), this protein is UAP56-interacting factor (Fyttd1).